The sequence spans 498 residues: ATP synthase subunit beta, chloroplastic (498 aa).

172 to 179 (GGAGVGKT) lines the ATP pocket.

The protein belongs to the ATPase alpha/beta chains family. As to quaternary structure, F-type ATPases have 2 components, CF(1) - the catalytic core - and CF(0) - the membrane proton channel. CF(1) has five subunits: alpha(3), beta(3), gamma(1), delta(1), epsilon(1). CF(0) has four main subunits: a(1), b(1), b'(1) and c(9-12).

Its subcellular location is the plastid. It is found in the chloroplast thylakoid membrane. It catalyses the reaction ATP + H2O + 4 H(+)(in) = ADP + phosphate + 5 H(+)(out). In terms of biological role, produces ATP from ADP in the presence of a proton gradient across the membrane. The catalytic sites are hosted primarily by the beta subunits. This is ATP synthase subunit beta, chloroplastic from Phoenix dactylifera (Date palm).